Here is a 1079-residue protein sequence, read N- to C-terminus: Electrogenic sodium bicarbonate cotransporter 1 (1079 aa).

The segment at 1–62 (MEDEAALDRG…EKKEKERVSE (62 aa)) is required for interaction with AHCYL1. Over 1-466 (MEDEAALDRG…FASDFYDALN (466 aa)) the chain is Cytoplasmic. Residue Tyr-30 is modified to Phosphotyrosine. The segment covering 39 to 52 (YRRRRRHKRKAGHR) has biased composition (basic residues). The interval 39–78 (YRRRRRHKRKAGHREKKEKERVSENYSDKSDVENADESSS) is disordered. Residues 53-70 (EKKEKERVSENYSDKSDV) show a composition bias toward basic and acidic residues. Phosphoserine occurs at positions 61, 65, 68, 223, 232, 233, and 245. The segment at 238–265 (FTSPENGSPAMTHRNLTSSSLNDISDKP) is disordered. Phosphothreonine occurs at positions 249 and 254. Residues 251–260 (RNLTSSSLND) are compositionally biased toward polar residues. Ser-256, Ser-257, and Ser-262 each carry phosphoserine. The chain crosses the membrane as a helical span at residues 467–491 (IQALSAILFIYLATVTNAITFGGLL). Residues 492–501 (GDATDNMQGV) lie on the Extracellular side of the membrane. The chain crosses the membrane as a helical span at residues 502–520 (LESFLGTAVSGAVFCLFAG). Gln-521 is a topological domain (cytoplasmic). The discontinuously helical transmembrane segment at 522 to 542 (PLTILSSTGPVLVFERLLFNF) threads the bilayer. The Extracellular portion of the chain corresponds to 543 to 550 (SKDHNFDY). Residues 551–571 (LEFRLWIGLWSAFLCLILVAT) traverse the membrane as a helical segment. Residues 572–585 (DASFLVQYFTRFTE) lie on the Cytoplasmic side of the membrane. A helical membrane pass occupies residues 586–609 (EGFSSLISFIFIYDAFKKMIKLAD). Residues 610 to 692 (YYPINSNFKV…GNNCDFVPDI (83 aa)) lie on the Extracellular side of the membrane. The helical transmembrane segment at 693 to 710 (TLMSFILFLGTYTSSMAL) threads the bilayer. Residues 711–725 (KKFKTSRYFPTTARK) are Cytoplasmic-facing. Residues 726–745 (LISDFAIILSILIFCVIDAL) form a helical membrane-spanning segment. At 746–779 (VGVDTPKLIVPSEFKPTSPNRGWFVPPFGGNPWW) the chain is on the extracellular side. The interaction with CA4 stretch occupies residues 748 to 779 (VDTPKLIVPSEFKPTSPNRGWFVPPFGGNPWW). The chain crosses the membrane as a helical span at residues 780 to 807 (VYLAAAIPALLVTILIFMDQQITAVIVN). The Cytoplasmic portion of the chain corresponds to 808–819 (RKEHKLKKGAGY). The helical transmembrane segment at 820-836 (HLDLFWVAILMVVCSFM) threads the bilayer. Ala-837 is a topological domain (extracellular). A discontinuously helical transmembrane segment spans residues 838–855 (LPWYVAATVISIAHIDSL). Over 856-877 (KMETETSAPGEQPKFLGVREQR) the chain is Cytoplasmic. The chain crosses the membrane as a helical span at residues 878–894 (VTGTLVFILTGLSVFMA). Residues 895-901 (PILKFIP) lie on the Extracellular side of the membrane. A helical membrane pass occupies residues 902-918 (MPVLYGVFLYMGVASLN). Residues 919 to 960 (GVQFMDRLKLLLMPLKHQPDFIYLRHVPLRRVHLFTFLQVLC) lie on the Cytoplasmic side of the membrane. The segment at residues 961–986 (LALLWILKSTVAAIIFPVMILALVAV) is an intramembrane region (discontinuously helical). Residues 987 to 1079 (RKGMDYLFSQ…PTFLERHTSC (93 aa)) are Cytoplasmic-facing. The tract at residues 1002-1004 (LDD) is CA2-binding. Residues 1012–1079 (KKKEDEKKKK…PTFLERHTSC (68 aa)) are disordered. Ser-1026 carries the phosphoserine; by PKA modification. Ser-1029 carries the phosphoserine modification. A CA2-binding region spans residues 1030 to 1033 (DSDD). 2 positions are modified to phosphoserine: Ser-1034 and Ser-1044. The required for basolateral targeting stretch occupies residues 1057–1059 (FLS). Residues 1062-1079 (KPSDRERSPTFLERHTSC) are compositionally biased toward basic and acidic residues. Phosphoserine is present on Ser-1069.

This sequence belongs to the anion exchanger (TC 2.A.31) family. As to quaternary structure, homodimer. Interacts with CA2/carbonic anhydrase 2 and CA4/carbonic anhydrase 4 which may regulate transporter activity. Isoform 1 but not isoform 2 interacts with AHCYL1 (via PEST domain when phosphorylated); the interaction increases SLC4A4 isoform 1 activity. Interacts with AHCYL2. In terms of processing, phosphorylation of Ser-1026 by PKA increases the binding of CA2 and changes the Na(+):HCO3(-) stoichiometry of the transporter from 3:1 to 2:1. Phosphorylated in presence of STK39 and dephosphorylated in presence of PP1 phosphatase; phosphorylation seems to inhibit SLC4A4 activity. Post-translationally, N-glycosylated. May not be necessary for the transporter basic functions. In terms of tissue distribution, expressed in vas deferens epithelia (at protein level).

It localises to the basolateral cell membrane. It is found in the cell membrane. It carries out the reaction 2 hydrogencarbonate(out) + Na(+)(out) = 2 hydrogencarbonate(in) + Na(+)(in). It catalyses the reaction 3 hydrogencarbonate(out) + Na(+)(out) = 3 hydrogencarbonate(in) + Na(+)(in). Its function is as follows. Electrogenic sodium/bicarbonate cotransporter with a Na(+):HCO3(-) stoichiometry varying from 1:2 to 1:3. May regulate bicarbonate influx/efflux at the basolateral membrane of cells and regulate intracellular pH. The protein is Electrogenic sodium bicarbonate cotransporter 1 (SLC4A4) of Sus scrofa (Pig).